A 249-amino-acid polypeptide reads, in one-letter code: Small ribosomal subunit protein uS3 (249 aa).

The KH type-2 domain occupies 39 to 109 (IRTYVLARLK…EVKIDVVEVV (71 aa)). A compositionally biased stretch (basic and acidic residues) spans 226–239 (KERRNDAGARNRDS). Residues 226–249 (KERRNDAGARNRDSRTKRRHRTKR) are disordered. Over residues 240 to 249 (RTKRRHRTKR) the composition is skewed to basic residues.

Belongs to the universal ribosomal protein uS3 family. As to quaternary structure, part of the 30S ribosomal subunit. Forms a tight complex with proteins S10 and S14.

Its function is as follows. Binds the lower part of the 30S subunit head. Binds mRNA in the 70S ribosome, positioning it for translation. This Pelodictyon phaeoclathratiforme (strain DSM 5477 / BU-1) protein is Small ribosomal subunit protein uS3.